A 477-amino-acid chain; its full sequence is Glycogen synthase (477 aa).

ADP-alpha-D-glucose is bound at residue lysine 15.

Belongs to the glycosyltransferase 1 family. Bacterial/plant glycogen synthase subfamily.

The catalysed reaction is [(1-&gt;4)-alpha-D-glucosyl](n) + ADP-alpha-D-glucose = [(1-&gt;4)-alpha-D-glucosyl](n+1) + ADP + H(+). It participates in glycan biosynthesis; glycogen biosynthesis. In terms of biological role, synthesizes alpha-1,4-glucan chains using ADP-glucose. This Klebsiella pneumoniae subsp. pneumoniae (strain ATCC 700721 / MGH 78578) protein is Glycogen synthase.